Reading from the N-terminus, the 80-residue chain is Small ribosomal subunit protein bS18 (80 aa).

It belongs to the bacterial ribosomal protein bS18 family. As to quaternary structure, part of the 30S ribosomal subunit. Forms a tight heterodimer with protein bS6.

In terms of biological role, binds as a heterodimer with protein bS6 to the central domain of the 16S rRNA, where it helps stabilize the platform of the 30S subunit. The chain is Small ribosomal subunit protein bS18 from Clostridium botulinum (strain 657 / Type Ba4).